Consider the following 274-residue polypeptide: Large ribosomal subunit protein uL2cz/uL2cy (274 aa).

Disordered regions lie at residues 1–21 (MAIH…VDSQ) and 225–274 (PVDH…RRSK).

Belongs to the universal ribosomal protein uL2 family. Part of the 50S ribosomal subunit.

Its subcellular location is the plastid. It is found in the chloroplast. This is Large ribosomal subunit protein uL2cz/uL2cy (rpl2-A) from Arabidopsis thaliana (Mouse-ear cress).